Here is a 340-residue protein sequence, read N- to C-terminus: Phosphate acyltransferase (340 aa).

This sequence belongs to the PlsX family. In terms of assembly, homodimer. Probably interacts with PlsY.

The protein localises to the cytoplasm. It catalyses the reaction a fatty acyl-[ACP] + phosphate = an acyl phosphate + holo-[ACP]. It participates in lipid metabolism; phospholipid metabolism. Its function is as follows. Catalyzes the reversible formation of acyl-phosphate (acyl-PO(4)) from acyl-[acyl-carrier-protein] (acyl-ACP). This enzyme utilizes acyl-ACP as fatty acyl donor, but not acyl-CoA. The protein is Phosphate acyltransferase of Pseudomonas savastanoi pv. phaseolicola (strain 1448A / Race 6) (Pseudomonas syringae pv. phaseolicola (strain 1448A / Race 6)).